The chain runs to 193 residues: Ion-translocating oxidoreductase complex subunit A (193 aa).

6 helical membrane-spanning segments follow: residues 5–25 (LLLFVGTVLVNNFVLVKFLGL), 39–59 (IGMGLATTFVLTLASVCAWMV), 62–82 (FILLPLGLIYLRTLAFILVIA), 102–122 (LLGIFLPLITTNCAVLGVALL), 134–154 (AVYGFSAAAGFSLVMVLFAAI), and 171–191 (SIALITAGLMSLAFMGFTGLV).

This sequence belongs to the NqrDE/RnfAE family. In terms of assembly, the complex is composed of six subunits: RnfA, RnfB, RnfC, RnfD, RnfE and RnfG.

Its subcellular location is the cell inner membrane. Its function is as follows. Part of a membrane-bound complex that couples electron transfer with translocation of ions across the membrane. This chain is Ion-translocating oxidoreductase complex subunit A, found in Yersinia pestis bv. Antiqua (strain Nepal516).